A 136-amino-acid polypeptide reads, in one-letter code: Small ribosomal subunit protein uS19 (136 aa).

Belongs to the universal ribosomal protein uS19 family.

In terms of biological role, protein S19 forms a complex with S13 that binds strongly to the 16S ribosomal RNA. The chain is Small ribosomal subunit protein uS19 from Methanosarcina mazei (strain ATCC BAA-159 / DSM 3647 / Goe1 / Go1 / JCM 11833 / OCM 88) (Methanosarcina frisia).